Consider the following 319-residue polypeptide: Thiamine-monophosphate kinase (319 aa).

Residues D28, T43, T44, and D45 each contribute to the Mg(2+) site. Residue H52 participates in substrate binding. D73 contacts Mg(2+). ATP contacts are provided by residues Y104, 121-122 (GD), and R145. Mg(2+) is bound at residue D122. A Mg(2+)-binding site is contributed by D218. S220 is a binding site for ATP. D221 provides a ligand contact to Mg(2+). Substrate is bound by residues E268 and Y315.

The protein belongs to the thiamine-monophosphate kinase family.

It carries out the reaction thiamine phosphate + ATP = thiamine diphosphate + ADP. Its pathway is cofactor biosynthesis; thiamine diphosphate biosynthesis; thiamine diphosphate from thiamine phosphate: step 1/1. Functionally, catalyzes the ATP-dependent phosphorylation of thiamine-monophosphate (TMP) to form thiamine-pyrophosphate (TPP), the active form of vitamin B1. The sequence is that of Thiamine-monophosphate kinase from Methanocaldococcus jannaschii (strain ATCC 43067 / DSM 2661 / JAL-1 / JCM 10045 / NBRC 100440) (Methanococcus jannaschii).